The following is a 327-amino-acid chain: GTPase Obg (327 aa).

One can recognise an Obg domain in the interval 1–159 (MQFIDQANII…WEVQLELKLL (159 aa)). The OBG-type G domain maps to 160 to 327 (AEVGIIGLPN…SLLSEVWKRI (168 aa)). Residues 166-173 (GLPNAGKS), 191-195 (FTTLI), 213-216 (DIPG), 280-283 (NKIE), and 309-311 (SSS) contribute to the ATP site. Mg(2+) contacts are provided by Ser-173 and Thr-193.

It belongs to the TRAFAC class OBG-HflX-like GTPase superfamily. OBG GTPase family. Monomer. Requires Mg(2+) as cofactor.

The protein localises to the cytoplasm. Functionally, an essential GTPase which binds GTP, GDP and possibly (p)ppGpp with moderate affinity, with high nucleotide exchange rates and a fairly low GTP hydrolysis rate. Plays a role in control of the cell cycle, stress response, ribosome biogenesis and in those bacteria that undergo differentiation, in morphogenesis control. The chain is GTPase Obg from Prochlorococcus marinus (strain AS9601).